We begin with the raw amino-acid sequence, 430 residues long: 3-phosphoshikimate 1-carboxyvinyltransferase (430 aa).

3 residues coordinate 3-phosphoshikimate: K21, S22, and R26. K21 lines the phosphoenolpyruvate pocket. Residues G94 and R122 each contribute to the phosphoenolpyruvate site. 3-phosphoshikimate contacts are provided by S168, Q170, D315, and K342. Q170 lines the phosphoenolpyruvate pocket. The Proton acceptor role is filled by D315. Phosphoenolpyruvate is bound by residues R346 and R389.

Belongs to the EPSP synthase family. In terms of assembly, monomer.

The protein localises to the cytoplasm. The enzyme catalyses 3-phosphoshikimate + phosphoenolpyruvate = 5-O-(1-carboxyvinyl)-3-phosphoshikimate + phosphate. Its pathway is metabolic intermediate biosynthesis; chorismate biosynthesis; chorismate from D-erythrose 4-phosphate and phosphoenolpyruvate: step 6/7. Its function is as follows. Catalyzes the transfer of the enolpyruvyl moiety of phosphoenolpyruvate (PEP) to the 5-hydroxyl of shikimate-3-phosphate (S3P) to produce enolpyruvyl shikimate-3-phosphate and inorganic phosphate. The chain is 3-phosphoshikimate 1-carboxyvinyltransferase from Salinibacter ruber (strain DSM 13855 / M31).